The sequence spans 166 residues: Ribonuclease P protein component (166 aa).

It belongs to the RnpA family. As to quaternary structure, consists of a catalytic RNA component (M1 or rnpB) and a protein subunit.

The enzyme catalyses Endonucleolytic cleavage of RNA, removing 5'-extranucleotides from tRNA precursor.. In terms of biological role, RNaseP catalyzes the removal of the 5'-leader sequence from pre-tRNA to produce the mature 5'-terminus. It can also cleave other RNA substrates such as 4.5S RNA. The protein component plays an auxiliary but essential role in vivo by binding to the 5'-leader sequence and broadening the substrate specificity of the ribozyme. The protein is Ribonuclease P protein component of Helicobacter pylori (strain HPAG1).